Here is a 352-residue protein sequence, read N- to C-terminus: Thiamine-monophosphate kinase (352 aa).

Mg(2+)-binding residues include D58, T73, and D75. H82 is a binding site for substrate. Mg(2+) is bound by residues D103 and D151. ATP is bound by residues 150–151 (GD) and R177. Residue D239 participates in Mg(2+) binding. Residue S241 participates in ATP binding. Position 242 (D242) interacts with Mg(2+). Substrate-binding residues include D294 and W349.

Belongs to the thiamine-monophosphate kinase family.

It catalyses the reaction thiamine phosphate + ATP = thiamine diphosphate + ADP. Its pathway is cofactor biosynthesis; thiamine diphosphate biosynthesis; thiamine diphosphate from thiamine phosphate: step 1/1. Catalyzes the ATP-dependent phosphorylation of thiamine-monophosphate (TMP) to form thiamine-pyrophosphate (TPP), the active form of vitamin B1. This Caulobacter vibrioides (strain ATCC 19089 / CIP 103742 / CB 15) (Caulobacter crescentus) protein is Thiamine-monophosphate kinase.